The sequence spans 370 residues: Holliday junction branch migration complex subunit RuvB (370 aa).

The large ATPase domain (RuvB-L) stretch occupies residues 1–182 (MDERMMTSAK…FGVIHRLEYY (182 aa)). ATP contacts are provided by residues leucine 21, arginine 22, glycine 63, lysine 66, threonine 67, threonine 68, 129 to 131 (EDF), arginine 172, tyrosine 182, and arginine 219. Residue threonine 67 coordinates Mg(2+). The tract at residues 183-253 (RPDELEFIIL…VAREALRRLE (71 aa)) is small ATPAse domain (RuvB-S). Residues 256–370 (PRGLDTTDQR…AEQAALSFDE (115 aa)) form a head domain (RuvB-H) region. DNA-binding residues include arginine 311 and arginine 316.

The protein belongs to the RuvB family. In terms of assembly, homohexamer. Forms an RuvA(8)-RuvB(12)-Holliday junction (HJ) complex. HJ DNA is sandwiched between 2 RuvA tetramers; dsDNA enters through RuvA and exits via RuvB. An RuvB hexamer assembles on each DNA strand where it exits the tetramer. Each RuvB hexamer is contacted by two RuvA subunits (via domain III) on 2 adjacent RuvB subunits; this complex drives branch migration. In the full resolvosome a probable DNA-RuvA(4)-RuvB(12)-RuvC(2) complex forms which resolves the HJ.

Its subcellular location is the cytoplasm. The enzyme catalyses ATP + H2O = ADP + phosphate + H(+). Its function is as follows. The RuvA-RuvB-RuvC complex processes Holliday junction (HJ) DNA during genetic recombination and DNA repair, while the RuvA-RuvB complex plays an important role in the rescue of blocked DNA replication forks via replication fork reversal (RFR). RuvA specifically binds to HJ cruciform DNA, conferring on it an open structure. The RuvB hexamer acts as an ATP-dependent pump, pulling dsDNA into and through the RuvAB complex. RuvB forms 2 homohexamers on either side of HJ DNA bound by 1 or 2 RuvA tetramers; 4 subunits per hexamer contact DNA at a time. Coordinated motions by a converter formed by DNA-disengaged RuvB subunits stimulates ATP hydrolysis and nucleotide exchange. Immobilization of the converter enables RuvB to convert the ATP-contained energy into a lever motion, pulling 2 nucleotides of DNA out of the RuvA tetramer per ATP hydrolyzed, thus driving DNA branch migration. The RuvB motors rotate together with the DNA substrate, which together with the progressing nucleotide cycle form the mechanistic basis for DNA recombination by continuous HJ branch migration. Branch migration allows RuvC to scan DNA until it finds its consensus sequence, where it cleaves and resolves cruciform DNA. The sequence is that of Holliday junction branch migration complex subunit RuvB from Heliobacterium modesticaldum (strain ATCC 51547 / Ice1).